A 974-amino-acid polypeptide reads, in one-letter code: Cell division control protein 15 (974 aa).

The Protein kinase domain occupies 25–272 (YHLKQVIGRG…ADQLLKHVWI (248 aa)). ATP is bound by residues 31 to 39 (IGRGSYGVV) and lysine 54. The Proton acceptor role is filled by aspartate 146. Positions 360–702 (CSLENIADTI…ITAICVEMSL (343 aa)) are self association domain. A compositionally biased stretch (low complexity) spans 554–563 (SSSLPLSSSP). The interval 554–592 (SSSLPLSSSPTRNSPVNSVQSPSRSPVHSLMATRPSSPM) is disordered. Residues serine 561 and serine 567 each carry the phosphoserine modification. Over residues 564-579 (TRNSPVNSVQSPSRSP) the composition is skewed to polar residues. Residues 751–974 (TVGSSESHSV…FSVPITTFQT (224 aa)) form an auto-inhibitory domain region. Threonine 870 is modified (phosphothreonine). Positions 941 to 974 (AAIGSSPTKDERSNLRSSKDKSDGFSVPITTFQT) are disordered. Residues 948–963 (TKDERSNLRSSKDKSD) are compositionally biased toward basic and acidic residues.

Belongs to the protein kinase superfamily. Ser/Thr protein kinase family. In terms of assembly, homodimer. Interacts with TEM1. In terms of processing, phosphorylation by CDK1 reduces the binding to the mother spindle pole body. The extent of phosphorylation gradually increases during cell-cycle progression until some point during late anaphase/telophase when it is rapidly dephosphorylated by CDC14. Phosphorylation inhibits kinase activity and dephosphorylation by CDC14 activates CDC15.

The protein resides in the cytoplasm. It is found in the cytoskeleton. It localises to the spindle pole. The protein localises to the bud neck. It catalyses the reaction L-seryl-[protein] + ATP = O-phospho-L-seryl-[protein] + ADP + H(+). The catalysed reaction is L-threonyl-[protein] + ATP = O-phospho-L-threonyl-[protein] + ADP + H(+). Its activity is regulated as follows. Kinase activity is inhibited by phosphorylation and activated by dephosphorylation by CDC14. Its function is as follows. Protein kinase of the mitotic exit network (MEN) essential for late nuclear division in the mitotic cycle. Promotes mitotic exit by phosphorylating DBF2 and directly switching on DBF2 kinase activity. Involved in the localization of DBF2 and DBF20 to the neck which is necessary to undergo cytokinesis. Plays a role in segregation of chromosomes during recovery from spindle checkpoint activation. Required for spindle pole localization of CDK1 and inactivation of CDC2 kinase activity at the end of mitosis. Required for spindle disassembly after meiosis II and plays a role in spore morphogenesis. This Saccharomyces cerevisiae (strain ATCC 204508 / S288c) (Baker's yeast) protein is Cell division control protein 15 (CDC15).